The following is a 1110-amino-acid chain: Retinal guanylyl cyclase 1 (1110 aa).

An N-terminal signal peptide occupies residues 1–56 (MTACTFLAGGLRDPGLCGPTRWAPSPPGLPPIPPRPRLRLRPPLLLLLLLPRSVLS). The Extracellular portion of the chain corresponds to 57 to 467 (AVFTVGVLGP…PDTICNGGVE (411 aa)). Asn-302 carries an N-linked (GlcNAc...) asparagine glycan. Residues 468 to 492 (PSVVFIGFLLVVGMGLAGAFLAHYC) traverse the membrane as a helical segment. A Protein kinase domain is found at 493–813 (RHRLLHIQMV…DRTFELFKSI (321 aa)). Residues 493 to 1110 (RHRLLHIQMV…KARPGQFSGK (618 aa)) are Cytoplasmic-facing. One can recognise a Guanylate cyclase domain in the interval 885–1015 (TLYFSDIVGF…DTVNTASAME (131 aa)). Positions 1070 to 1110 (PIPKPPDLQPGASNHGISLHEIPPDRRQKLEKARPGQFSGK) are disordered. Residues 1091–1103 (IPPDRRQKLEKAR) are compositionally biased toward basic and acidic residues.

The protein belongs to the adenylyl cyclase class-4/guanylyl cyclase family. Homodimer; requires homodimerization for guanylyl cyclase activity. Interacts (via C-terminus) with RD3 (via C-terminus); promotes the exit of GUCY2D from the endoplasmic reticulum and its trafficking to the photoreceptor outer segments. Interaction with RD3 negatively regulates GUCY2D guanylate cyclase activity. In terms of tissue distribution, expressed in the retina in rod outer segment.

It is found in the photoreceptor outer segment membrane. It localises to the endoplasmic reticulum membrane. The catalysed reaction is GTP = 3',5'-cyclic GMP + diphosphate. Its activity is regulated as follows. Activated by GUCA1A when free calcium ions concentration is low, and inhibited by GUCA1A when free calcium ions concentration is high. Negatively regulated by RD3; inhibits the basal and GUCA1A-stimulated guanylate cyclase activity. Catalyzes the synthesis of cyclic GMP (cGMP) in rods and cones of photoreceptors. Plays an essential role in phototransduction, by mediating cGMP replenishment. May also participate in the trafficking of membrane-asociated proteins to the photoreceptor outer segment membrane. In Bos taurus (Bovine), this protein is Retinal guanylyl cyclase 1 (GUCY2D).